The following is a 384-amino-acid chain: F-box/kelch-repeat protein At3g44120 (384 aa).

Residues 1–46 (MTLPELPKDLVEEILCFVPATSLKRLRSSCKEWNRLFKDDKRFARK) form the F-box domain. Kelch repeat units lie at residues 156–202 (CNKS…RECF), 264–314 (SVLV…FLLD), and 352–384 (GVQT…KRDY).

This is F-box/kelch-repeat protein At3g44120 from Arabidopsis thaliana (Mouse-ear cress).